Reading from the N-terminus, the 137-residue chain is MKQRTLSIIKPDALKKKVVGKIIDRFESNGLEVIAMKRLHLSVKDAENFYAIHRERPFFKDLIEFMVSGPVVVMVLEGKDAVAKNRDLMGATDPKLAQKGTIRADFAESIDANAVHGSDSLENAHNEIAFFFAARDL.

Residues K10, F58, R86, T92, R103, and N113 each contribute to the ATP site. H116 acts as the Pros-phosphohistidine intermediate in catalysis.

The protein belongs to the NDK family. Homotetramer. Mg(2+) serves as cofactor.

The protein resides in the cytoplasm. The catalysed reaction is a 2'-deoxyribonucleoside 5'-diphosphate + ATP = a 2'-deoxyribonucleoside 5'-triphosphate + ADP. It carries out the reaction a ribonucleoside 5'-diphosphate + ATP = a ribonucleoside 5'-triphosphate + ADP. Functionally, major role in the synthesis of nucleoside triphosphates other than ATP. The ATP gamma phosphate is transferred to the NDP beta phosphate via a ping-pong mechanism, using a phosphorylated active-site intermediate. This chain is Nucleoside diphosphate kinase, found in Helicobacter pylori (strain G27).